The chain runs to 354 residues: 3'-5' exonuclease (354 aa).

Residues 1 to 120 are disordered; sequence MERFLTKMPI…PSPEKEKPEK (120 aa). Composition is skewed to basic and acidic residues over residues 13–30 and 37–50; these read KANEVPKKEAVAKKETPK and KKDTPKELKDKENA. A compositionally biased stretch (basic residues) spans 59–70; it reads TKGRPGRPAAKR. Residues 71–91 show a composition bias toward basic and acidic residues; it reads KNLDTPDVKDEKIAMEEENPP. S104, S110, and S112 each carry phosphoserine. Positions 149 to 314 constitute a 3'-5' exonuclease domain; it reads WVEKQKDDVV…GQVIYRELER (166 aa). 3 residues coordinate Mg(2+): D163, E165, and D301.

It belongs to the WRNexo family.

It localises to the nucleus. Has exonuclease activity on both single-stranded and duplex templates bearing overhangs, but not blunt ended duplex DNA, and cleaves in a 3'-5' direction. Essential for the formation of DNA replication focal centers. Has an important role in maintaining genome stability. In Drosophila simulans (Fruit fly), this protein is 3'-5' exonuclease.